Consider the following 173-residue polypeptide: Crossover junction endodeoxyribonuclease RuvC (173 aa).

Catalysis depends on residues aspartate 8, glutamate 67, and aspartate 139. Mg(2+) contacts are provided by aspartate 8, glutamate 67, and aspartate 139.

It belongs to the RuvC family. In terms of assembly, homodimer which binds Holliday junction (HJ) DNA. The HJ becomes 2-fold symmetrical on binding to RuvC with unstacked arms; it has a different conformation from HJ DNA in complex with RuvA. In the full resolvosome a probable DNA-RuvA(4)-RuvB(12)-RuvC(2) complex forms which resolves the HJ. Mg(2+) is required as a cofactor.

The protein localises to the cytoplasm. It carries out the reaction Endonucleolytic cleavage at a junction such as a reciprocal single-stranded crossover between two homologous DNA duplexes (Holliday junction).. Functionally, the RuvA-RuvB-RuvC complex processes Holliday junction (HJ) DNA during genetic recombination and DNA repair. Endonuclease that resolves HJ intermediates. Cleaves cruciform DNA by making single-stranded nicks across the HJ at symmetrical positions within the homologous arms, yielding a 5'-phosphate and a 3'-hydroxyl group; requires a central core of homology in the junction. The consensus cleavage sequence is 5'-(A/T)TT(C/G)-3'. Cleavage occurs on the 3'-side of the TT dinucleotide at the point of strand exchange. HJ branch migration catalyzed by RuvA-RuvB allows RuvC to scan DNA until it finds its consensus sequence, where it cleaves and resolves the cruciform DNA. This chain is Crossover junction endodeoxyribonuclease RuvC, found in Aeromonas hydrophila subsp. hydrophila (strain ATCC 7966 / DSM 30187 / BCRC 13018 / CCUG 14551 / JCM 1027 / KCTC 2358 / NCIMB 9240 / NCTC 8049).